The sequence spans 1089 residues: Probable transport protein MmpL8 (1089 aa).

Residues 1–26 (MCDVLMQPVRTPRPSTNLRSKPLRPT) form a disordered region. 12 helical membrane passes run 44–64 (WVVIAFWVALAGLLAPTVPSL), 222–242 (ITILLLVILLIIYGNPITMVL), 257–277 (LVAIAGLAGLGIANQSIIFMS), 316–336 (IGKVIAASAATVAITFLGMVF), 349–369 (LGISVAVVFFAAVTLLPALMV), 400–420 (KTHLLASALVLVILAGCAGLA), 555–575 (AISTVGGLIDALAYLQDLLGG), 874–894 (IIAMTVCIVLLILIVLLRAIV), 898–918 (YLIGSVIVSYLAALGIGVIVF), 930–950 (IPGLTFVILVAVGADYNMLLI), 973–993 (GGVITAAGLIMAASMYGLVFA), and 996–1016 (GSVVQGAFVLGTGLLLDTFLV). A disordered region spans residues 1056–1078 (RTKRKPLLPKEEEEQSPPDDDDL). The segment covering 1066-1078 (EEEEQSPPDDDDL) has biased composition (acidic residues).

Belongs to the resistance-nodulation-cell division (RND) (TC 2.A.6) family. MmpL subfamily.

It is found in the cell membrane. The chain is Probable transport protein MmpL8 (mmpL8) from Mycobacterium tuberculosis (strain ATCC 25177 / H37Ra).